The sequence spans 602 residues: Spermidine-citrate ligase (602 aa).

ATP-binding positions include 286–288, lysine 300, and arginine 312; that span reads SLR.

The protein belongs to the IucA/IucC family.

It catalyses the reaction spermidine + citrate + ATP = N(8)-citryl-spermidine + AMP + diphosphate + H(+). The protein operates within siderophore biosynthesis; petrobactin biosynthesis. Its function is as follows. Involved in the biosynthesis of petrobactin, a catecholate siderophore that functions in both iron acquisition and virulence. Catalyzes the ATP-dependent condensation of citric acid and spermidine to form N(8)-citryl-spermidine. It can also catalyze the condensation of several di- and triamine analogs of spermidine with citric acid and the condensation of the citric acid analog tricarballylic acid with spermidine. Required for growth in iron-depleted medium and for full virulence in a mouse model of infection. This Bacillus anthracis protein is Spermidine-citrate ligase.